The primary structure comprises 161 residues: MDDIYKAAVEQLTEEQKNEFKAAFDIFVLGAEDGCISTKELGKVMRMLGQNPTPEELQEMIDEVDEDGSGTVDFDEFLVMMVRCMKDDSKGKTEEELSDLFRMFDKNADGYIDLEELKIMLQATGETITEDDIEELMKDGDKNNDGRIDYDEFLEFMKGVE.

Position 1 is an N-acetylmethionine (methionine 1). EF-hand domains are found at residues glutamine 16–asparagine 51, proline 52–aspartate 87, lysine 92–threonine 127, and isoleucine 128–glutamate 161. Residues aspartate 65, aspartate 67, serine 69, threonine 71, glutamate 76, aspartate 105, asparagine 107, aspartate 109, tyrosine 111, glutamate 116, aspartate 141, asparagine 143, aspartate 145, arginine 147, and glutamate 152 each contribute to the Ca(2+) site.

This sequence belongs to the troponin C family.

In terms of biological role, troponin is the central regulatory protein of striated muscle contraction. Tn consists of three components: Tn-I which is the inhibitor of actomyosin ATPase, Tn-T which contains the binding site for tropomyosin and Tn-C. The binding of calcium to Tn-C abolishes the inhibitory action of Tn on actin filaments. This Gallus gallus (Chicken) protein is Troponin C, slow skeletal and cardiac muscles (TNNC1).